Reading from the N-terminus, the 84-residue chain is Cytochrome b559 subunit alpha (84 aa).

The helical transmembrane segment at 22-36 threads the bilayer; sequence VIHSITIPSLFVAGW. Residue His24 participates in heme binding.

The protein belongs to the PsbE/PsbF family. As to quaternary structure, heterodimer of an alpha subunit and a beta subunit. PSII is composed of 1 copy each of membrane proteins PsbA, PsbB, PsbC, PsbD, PsbE, PsbF, PsbH, PsbI, PsbJ, PsbK, PsbL, PsbM, PsbT, PsbX, PsbY, PsbZ, Psb30/Ycf12, at least 3 peripheral proteins of the oxygen-evolving complex and a large number of cofactors. It forms dimeric complexes. Heme b is required as a cofactor.

The protein localises to the plastid. It is found in the chloroplast thylakoid membrane. In terms of biological role, this b-type cytochrome is tightly associated with the reaction center of photosystem II (PSII). PSII is a light-driven water:plastoquinone oxidoreductase that uses light energy to abstract electrons from H(2)O, generating O(2) and a proton gradient subsequently used for ATP formation. It consists of a core antenna complex that captures photons, and an electron transfer chain that converts photonic excitation into a charge separation. This chain is Cytochrome b559 subunit alpha, found in Gracilaria tenuistipitata var. liui (Red alga).